The following is a 946-amino-acid chain: Inter-alpha-trypsin inhibitor heavy chain H2 (946 aa).

The signal sequence occupies residues 1 to 18 (MQRPVCLLIWLFLLEAQA). Positions 19 to 54 (FEIPINGNSEFAEYSDLVELAPDKLPFVQENGRHQR) are excised as a propeptide. A VIT domain is found at 56–185 (LPEESGEETD…KVQFELHYQE (130 aa)). A Phosphoserine modification is found at Ser60. Residues Asn118 and Asn263 are each glycosylated (N-linked (GlcNAc...) asparagine). Residues Glu282 and Glu283 each carry the 4-carboxyglutamate modification. The region spanning 308-468 (PKNILFVIDV…YDFLKRLSNE (161 aa)) is the VWFA domain. Residue Asn445 is glycosylated (N-linked (GlcNAc...) asparagine). Ser466 is subject to Phosphoserine. Asp702 bears the Aspartate 1-(chondroitin 4-sulfate)-ester mark. A propeptide spanning residues 703-946 (PHFIIYLPKS…PQLYSFLKRP (244 aa)) is cleaved from the precursor. Ser886 is modified (phosphoserine).

It belongs to the ITIH family. In terms of assembly, I-alpha-I plasma protease inhibitors are assembled from one or two heavy chains (HC) and one light chain, bikunin. Inter-alpha-inhibitor (I-alpha-I) is composed of ITIH1/HC1, ITIH2/HC2 and bikunin. In terms of processing, heavy chains are linked to bikunin via chondroitin 4-sulfate esterified to the alpha-carboxyl of the C-terminal aspartate after propeptide cleavage. Phosphorylated by FAM20C in the extracellular medium. In terms of tissue distribution, expressed in both liver and brain.

It localises to the secreted. In terms of biological role, may act as a carrier of hyaluronan in serum or as a binding protein between hyaluronan and other matrix protein, including those on cell surfaces in tissues to regulate the localization, synthesis and degradation of hyaluronan which are essential to cells undergoing biological processes. This is Inter-alpha-trypsin inhibitor heavy chain H2 (Itih2) from Mus musculus (Mouse).